The following is a 1390-amino-acid chain: DNA-directed RNA polymerase subunit beta (1390 aa).

The protein belongs to the RNA polymerase beta chain family. As to quaternary structure, the RNAP catalytic core consists of 2 alpha, 1 beta, 1 beta' and 1 omega subunit. When a sigma factor is associated with the core the holoenzyme is formed, which can initiate transcription.

It carries out the reaction RNA(n) + a ribonucleoside 5'-triphosphate = RNA(n+1) + diphosphate. In terms of biological role, DNA-dependent RNA polymerase catalyzes the transcription of DNA into RNA using the four ribonucleoside triphosphates as substrates. This Rhodopseudomonas palustris (strain HaA2) protein is DNA-directed RNA polymerase subunit beta.